The primary structure comprises 90 residues: UPF0298 protein SSU98_1559 (90 aa).

It belongs to the UPF0298 family.

The protein resides in the cytoplasm. In Streptococcus suis (strain 98HAH33), this protein is UPF0298 protein SSU98_1559.